The following is a 488-amino-acid chain: GTPase Der (488 aa).

2 EngA-type G domains span residues 3-166 (PVVA…AEAM) and 199-372 (IKLA…DSAT). Residues 9-16 (GRPNVGKS), 56-60 (DTGGI), 118-121 (NKVD), 205-212 (GKPNVGKS), 252-256 (DTAGV), and 317-320 (NKWD) each bind GTP. A KH-like domain is found at 373–457 (RRVSTSMLTR…PIQLRFQEGD (85 aa)). The segment at 460–488 (FENKTEKLTMSQERRRKRAQSHIKDRKTK) is disordered. Positions 473–488 (RRRKRAQSHIKDRKTK) are enriched in basic residues.

It belongs to the TRAFAC class TrmE-Era-EngA-EngB-Septin-like GTPase superfamily. EngA (Der) GTPase family. In terms of assembly, associates with the 50S ribosomal subunit.

In terms of biological role, GTPase that plays an essential role in the late steps of ribosome biogenesis. This Shewanella baltica (strain OS155 / ATCC BAA-1091) protein is GTPase Der.